A 305-amino-acid polypeptide reads, in one-letter code: MLGRNTWKTSAFSFLVEQMWAPLWSRSMRPGRWCSQRSCAWQTSNNTLHPLWTVPVSVPGGTRQSPINIQWRDSVYDPQLKPLRVSYEAASCLYIWNTGYLFQVEFDDATEASGISGGPLENHYRLKQFHFHWGAVNEGGSEHTVDGHAYPAELHLVHWNSVKYQNYKEAVVGENGLAVIGVFLKLGAHHQTLQRLVDILPEIKHKDARAAMRPFDPSTLLPTCWDYWTYAGSLTTPPLTESVTWIIQKEPVEVAPSQLSAFRTLLFSALGEEEKMMVNNYRPLQPLMNRKVWASFQATNEGTRS.

Residues 1 to 38 (MLGRNTWKTSAFSFLVEQMWAPLWSRSMRPGRWCSQRS) constitute a mitochondrion transit peptide. In terms of domain architecture, Alpha-carbonic anhydrase spans 39–296 (CAWQTSNNTL…LMNRKVWASF (258 aa)). Residues His-130, His-132, and His-155 each contribute to the Zn(2+) site.

This sequence belongs to the alpha-carbonic anhydrase family. Zn(2+) is required as a cofactor.

It is found in the mitochondrion. It carries out the reaction hydrogencarbonate + H(+) = CO2 + H2O. Its activity is regulated as follows. Activated by L- and D-histidine. Activated by L- and D-phenylalanine. Activated by L-adrenaline. Inhibited by coumarins, sulfonamide derivatives such as acetazolamide and Foscarnet (phosphonoformate trisodium salt). Activated by histamine. In terms of biological role, mitochondrial carbonic anhydrase that catalyzes the reversible conversion of carbon dioxide to bicarbonate/HCO3. Mitochondria are impermeable to HCO3, and thus this intramitochondrial carbonic anhydrase is pivotal in providing HCO3 for multiple mitochondrial enzymes that catalyze the formation of essential metabolites of intermediary metabolism in the urea and Krebs cycles. The chain is Carbonic anhydrase 5A, mitochondrial from Homo sapiens (Human).